The sequence spans 145 residues: uncharacterized protein (145 aa).

The protein belongs to the SAP18 family.

The protein resides in the cytoplasm. It is found in the nucleus. This is an uncharacterized protein from Schizosaccharomyces pombe (strain 972 / ATCC 24843) (Fission yeast).